A 116-amino-acid polypeptide reads, in one-letter code: UPF0102 protein Sala_0262 (116 aa).

Belongs to the UPF0102 family.

This is UPF0102 protein Sala_0262 from Sphingopyxis alaskensis (strain DSM 13593 / LMG 18877 / RB2256) (Sphingomonas alaskensis).